We begin with the raw amino-acid sequence, 157 residues long: S-ribosylhomocysteine lyase (157 aa).

Fe cation is bound by residues H54, H58, and C126.

Belongs to the LuxS family. Homodimer. It depends on Fe cation as a cofactor.

The enzyme catalyses S-(5-deoxy-D-ribos-5-yl)-L-homocysteine = (S)-4,5-dihydroxypentane-2,3-dione + L-homocysteine. Functionally, involved in the synthesis of autoinducer 2 (AI-2) which is secreted by bacteria and is used to communicate both the cell density and the metabolic potential of the environment. The regulation of gene expression in response to changes in cell density is called quorum sensing. Catalyzes the transformation of S-ribosylhomocysteine (RHC) to homocysteine (HC) and 4,5-dihydroxy-2,3-pentadione (DPD). This is S-ribosylhomocysteine lyase from Bacillus cereus (strain G9842).